The primary structure comprises 166 residues: Crossover junction endodeoxyribonuclease RuvC (166 aa).

Catalysis depends on residues aspartate 11, glutamate 71, and aspartate 142. Positions 11, 71, and 142 each coordinate Mg(2+).

The protein belongs to the RuvC family. As to quaternary structure, homodimer which binds Holliday junction (HJ) DNA. The HJ becomes 2-fold symmetrical on binding to RuvC with unstacked arms; it has a different conformation from HJ DNA in complex with RuvA. In the full resolvosome a probable DNA-RuvA(4)-RuvB(12)-RuvC(2) complex forms which resolves the HJ. Requires Mg(2+) as cofactor.

It localises to the cytoplasm. The catalysed reaction is Endonucleolytic cleavage at a junction such as a reciprocal single-stranded crossover between two homologous DNA duplexes (Holliday junction).. Its function is as follows. The RuvA-RuvB-RuvC complex processes Holliday junction (HJ) DNA during genetic recombination and DNA repair. Endonuclease that resolves HJ intermediates. Cleaves cruciform DNA by making single-stranded nicks across the HJ at symmetrical positions within the homologous arms, yielding a 5'-phosphate and a 3'-hydroxyl group; requires a central core of homology in the junction. The consensus cleavage sequence is 5'-(A/T)TT(C/G)-3'. Cleavage occurs on the 3'-side of the TT dinucleotide at the point of strand exchange. HJ branch migration catalyzed by RuvA-RuvB allows RuvC to scan DNA until it finds its consensus sequence, where it cleaves and resolves the cruciform DNA. The sequence is that of Crossover junction endodeoxyribonuclease RuvC from Maricaulis maris (strain MCS10) (Caulobacter maris).